A 407-amino-acid chain; its full sequence is Tryptophan synthase beta chain (407 aa).

The residue at position 91 (Lys-91) is an N6-(pyridoxal phosphate)lysine.

This sequence belongs to the TrpB family. As to quaternary structure, tetramer of two alpha and two beta chains. Pyridoxal 5'-phosphate is required as a cofactor.

The catalysed reaction is (1S,2R)-1-C-(indol-3-yl)glycerol 3-phosphate + L-serine = D-glyceraldehyde 3-phosphate + L-tryptophan + H2O. Its pathway is amino-acid biosynthesis; L-tryptophan biosynthesis; L-tryptophan from chorismate: step 5/5. Its function is as follows. The beta subunit is responsible for the synthesis of L-tryptophan from indole and L-serine. The chain is Tryptophan synthase beta chain from Streptococcus pneumoniae serotype 2 (strain D39 / NCTC 7466).